The chain runs to 461 residues: Glycine--tRNA ligase (461 aa).

Substrate-binding residues include arginine 99 and glutamate 173. Residues arginine 205–glutamate 207, phenylalanine 215–phenylalanine 220, glutamate 289–leucine 290, and glycine 333–arginine 336 each bind ATP. Phenylalanine 220–glutamate 224 lines the substrate pocket. Glutamate 329–glycine 333 lines the substrate pocket.

The protein belongs to the class-II aminoacyl-tRNA synthetase family. As to quaternary structure, homodimer.

Its subcellular location is the cytoplasm. It carries out the reaction tRNA(Gly) + glycine + ATP = glycyl-tRNA(Gly) + AMP + diphosphate. Catalyzes the attachment of glycine to tRNA(Gly). The chain is Glycine--tRNA ligase from Lysinibacillus sphaericus (strain C3-41).